We begin with the raw amino-acid sequence, 449 residues long: 23S rRNA (uracil(1939)-C(5))-methyltransferase RlmD (449 aa).

In terms of domain architecture, TRAM spans 12-70 (SKQLSAKQSFSVHQLDHLGAGIAQHQGKVVFIPGALPSETVQAQLTEQKKNYARAKLIK). [4Fe-4S] cluster is bound by residues C83, C89, C92, and C170. Q282, F311, N316, E332, D359, and D379 together coordinate S-adenosyl-L-methionine. C405 serves as the catalytic Nucleophile.

The protein belongs to the class I-like SAM-binding methyltransferase superfamily. RNA M5U methyltransferase family. RlmD subfamily.

The enzyme catalyses uridine(1939) in 23S rRNA + S-adenosyl-L-methionine = 5-methyluridine(1939) in 23S rRNA + S-adenosyl-L-homocysteine + H(+). Functionally, catalyzes the formation of 5-methyl-uridine at position 1939 (m5U1939) in 23S rRNA. This chain is 23S rRNA (uracil(1939)-C(5))-methyltransferase RlmD, found in Shewanella sp. (strain MR-7).